The primary structure comprises 132 residues: Small ribosomal subunit protein uS8c (132 aa).

Belongs to the universal ribosomal protein uS8 family. In terms of assembly, part of the 30S ribosomal subunit.

The protein localises to the plastid. It localises to the chloroplast. Its function is as follows. One of the primary rRNA binding proteins, it binds directly to 16S rRNA central domain where it helps coordinate assembly of the platform of the 30S subunit. This is Small ribosomal subunit protein uS8c (rps8) from Chaetosphaeridium globosum (Charophycean green alga).